The following is a 217-amino-acid chain: Phosphoribosylformylglycinamidine synthase subunit PurQ (217 aa).

A Glutamine amidotransferase type-1 domain is found at 2–217; it reads NIGIIVFPGS…GKSILSTLLS (216 aa). Residue C86 is the Nucleophile of the active site. Active-site residues include H194 and E196.

Part of the FGAM synthase complex composed of 1 PurL, 1 PurQ and 2 PurS subunits.

The protein localises to the cytoplasm. It catalyses the reaction N(2)-formyl-N(1)-(5-phospho-beta-D-ribosyl)glycinamide + L-glutamine + ATP + H2O = 2-formamido-N(1)-(5-O-phospho-beta-D-ribosyl)acetamidine + L-glutamate + ADP + phosphate + H(+). It carries out the reaction L-glutamine + H2O = L-glutamate + NH4(+). It participates in purine metabolism; IMP biosynthesis via de novo pathway; 5-amino-1-(5-phospho-D-ribosyl)imidazole from N(2)-formyl-N(1)-(5-phospho-D-ribosyl)glycinamide: step 1/2. Part of the phosphoribosylformylglycinamidine synthase complex involved in the purines biosynthetic pathway. Catalyzes the ATP-dependent conversion of formylglycinamide ribonucleotide (FGAR) and glutamine to yield formylglycinamidine ribonucleotide (FGAM) and glutamate. The FGAM synthase complex is composed of three subunits. PurQ produces an ammonia molecule by converting glutamine to glutamate. PurL transfers the ammonia molecule to FGAR to form FGAM in an ATP-dependent manner. PurS interacts with PurQ and PurL and is thought to assist in the transfer of the ammonia molecule from PurQ to PurL. This chain is Phosphoribosylformylglycinamidine synthase subunit PurQ, found in Prochlorococcus marinus (strain NATL2A).